The primary structure comprises 221 residues: uncharacterized protein (221 aa).

The protein localises to the mitochondrion. This is an uncharacterized protein from Paramecium tetraurelia.